Here is a 132-residue protein sequence, read N- to C-terminus: MGLGIDILKISRISRLIQRSPEWEKNFLKKCLCENEIKKYNLIKSNSSLPRLSEQAKWLAVRWCVKEAVFKALQPNFRVYMSMMEYVRTPTGYPSVVIHDPRFPLSPVMVSVSHEEDLVVANALYLPSMPKT.

Mg(2+) is bound by residues aspartate 6 and glutamate 67.

The protein belongs to the P-Pant transferase superfamily. AcpS family.

The catalysed reaction is apo-[ACP] + CoA = holo-[ACP] + adenosine 3',5'-bisphosphate + H(+). Its function is as follows. Transfers the 4'-phosphopantetheine moiety from coenzyme A to a Ser of acyl-carrier-protein. This is Putative holo-[acyl-carrier-protein] synthase (new8) from Schizosaccharomyces pombe (strain 972 / ATCC 24843) (Fission yeast).